The chain runs to 358 residues: Period circadian protein (358 aa).

PAS domains follow at residues 1-120 and 138-240; these read GVVM…QTVP and FIMR…YIIE.

In terms of assembly, forms a heterodimer with timeless (TIM); the complex then translocates into the nucleus. In terms of processing, phosphorylated with a circadian rhythmicity.

The protein resides in the nucleus. Functionally, involved in the generation of biological rhythms. The biological cycle depends on the rhythmic formation and nuclear localization of the tim-per complex. Light induces the degradation of tim, which promotes elimination of per. Nuclear activity of the heterodimer coordinatively regulates per and tim transcription negative feedback loop. Behaves as a negative element in circadian transcriptional loop. Does not appear to bind DNA, suggesting indirect transcriptional inhibition. In Hyalophora cecropia (Cecropia moth), this protein is Period circadian protein (per).